The sequence spans 291 residues: Ribosomal RNA small subunit methyltransferase A (291 aa).

S-adenosyl-L-methionine-binding residues include asparagine 29, leucine 31, glycine 56, glutamate 77, aspartate 102, and asparagine 127.

The protein belongs to the class I-like SAM-binding methyltransferase superfamily. rRNA adenine N(6)-methyltransferase family. RsmA subfamily.

Its subcellular location is the cytoplasm. The enzyme catalyses adenosine(1518)/adenosine(1519) in 16S rRNA + 4 S-adenosyl-L-methionine = N(6)-dimethyladenosine(1518)/N(6)-dimethyladenosine(1519) in 16S rRNA + 4 S-adenosyl-L-homocysteine + 4 H(+). Specifically dimethylates two adjacent adenosines (A1518 and A1519) in the loop of a conserved hairpin near the 3'-end of 16S rRNA in the 30S particle. May play a critical role in biogenesis of 30S subunits. The polypeptide is Ribosomal RNA small subunit methyltransferase A (Geobacillus sp. (strain WCH70)).